Reading from the N-terminus, the 734-residue chain is Homoaconitase, mitochondrial (734 aa).

A mitochondrion-targeting transit peptide spans Met1 to Leu25. [4Fe-4S] cluster-binding residues include Cys367, Cys427, and Cys430.

The protein belongs to the aconitase/IPM isomerase family. [4Fe-4S] cluster is required as a cofactor.

It is found in the mitochondrion. The enzyme catalyses (2R,3S)-homoisocitrate = cis-homoaconitate + H2O. It participates in amino-acid biosynthesis; L-lysine biosynthesis via AAA pathway; L-alpha-aminoadipate from 2-oxoglutarate: step 3/5. Catalyzes the reversible hydration of cis-homoaconitate to (2R,3S)-homoisocitrate, a step in the alpha-aminoadipate pathway for lysine biosynthesis. In Mycosarcoma maydis (Corn smut fungus), this protein is Homoaconitase, mitochondrial (LYS4).